A 728-amino-acid chain; its full sequence is Catalase-peroxidase 2 (728 aa).

Residues 91–214 (WHAAGTYRTG…LAAVQMGLIY (124 aa)) constitute a cross-link (tryptophyl-tyrosyl-methioninium (Trp-Tyr) (with M-240)). His-92 (proton acceptor) is an active-site residue. Positions 214-240 (YVNPEGPNGNPDPAKAAVDIRETFARM) form a cross-link, tryptophyl-tyrosyl-methioninium (Tyr-Met) (with W-91). His-255 lines the heme b pocket. The disordered stretch occupies residues 338–362 (WKPNGDAGANSIPDPYDPSRRRGPT).

This sequence belongs to the peroxidase family. Peroxidase/catalase subfamily. Homodimer or homotetramer. Heme b is required as a cofactor. In terms of processing, formation of the three residue Trp-Tyr-Met cross-link is important for the catalase, but not the peroxidase activity of the enzyme.

The enzyme catalyses H2O2 + AH2 = A + 2 H2O. It catalyses the reaction 2 H2O2 = O2 + 2 H2O. Its function is as follows. Bifunctional enzyme with both catalase and broad-spectrum peroxidase activity. The polypeptide is Catalase-peroxidase 2 (Cupriavidus pinatubonensis (strain JMP 134 / LMG 1197) (Cupriavidus necator (strain JMP 134))).